The chain runs to 301 residues: MTILIIPQDPSENGNPAVDTIPPLLFPRLKNSYSRRAARLRQLAAKNPLGDYLRFAAVIASAQEIVLYDHPLRMDPRARLEESARSGRPPLDINTLPRDAHWQRLLHSLIAELKPDMSGQALSVLENLEKSSSVELEAMAGALFSNEFSQVSSDKAPFIWAALSIYWAQMAALIPGKAYVKAGEQRQFCPVCGSVPVSSMIHVDGVRYLHCNLCESEWHVADAKCSNCEQTRDLHHWSLDSAAVKAESCGDCGTWLKRLYQEKDPAVEAVADDLATLILDARMEQEGFARSSLNPFLFPGE.

The protein belongs to the FdhE family.

Its subcellular location is the cytoplasm. Functionally, necessary for formate dehydrogenase activity. The chain is Protein FdhE homolog from Erwinia tasmaniensis (strain DSM 17950 / CFBP 7177 / CIP 109463 / NCPPB 4357 / Et1/99).